The chain runs to 199 residues: Protein-methionine-sulfoxide reductase heme-binding subunit MsrQ (199 aa).

5 helical membrane passes run 10-30, 79-99, 118-138, 147-167, and 169-189; these read WLKV…ILSV, LLGL…SVLE, LTLG…STLW, WQKL…HYLW, and VKTL…LLAL.

The protein belongs to the MsrQ family. Heterodimer of a catalytic subunit (MsrP) and a heme-binding subunit (MsrQ). The cofactor is FMN. Heme b serves as cofactor.

It localises to the cell inner membrane. Its function is as follows. Part of the MsrPQ system that repairs oxidized periplasmic proteins containing methionine sulfoxide residues (Met-O), using respiratory chain electrons. Thus protects these proteins from oxidative-stress damage caused by reactive species of oxygen and chlorine generated by the host defense mechanisms. MsrPQ is essential for the maintenance of envelope integrity under bleach stress, rescuing a wide series of structurally unrelated periplasmic proteins from methionine oxidation. MsrQ provides electrons for reduction to the reductase catalytic subunit MsrP, using the quinone pool of the respiratory chain. The protein is Protein-methionine-sulfoxide reductase heme-binding subunit MsrQ of Yersinia enterocolitica serotype O:8 / biotype 1B (strain NCTC 13174 / 8081).